The following is a 242-amino-acid chain: 3-deoxy-manno-octulosonate cytidylyltransferase (242 aa).

This sequence belongs to the KdsB family.

The protein resides in the cytoplasm. It catalyses the reaction 3-deoxy-alpha-D-manno-oct-2-ulosonate + CTP = CMP-3-deoxy-beta-D-manno-octulosonate + diphosphate. It participates in nucleotide-sugar biosynthesis; CMP-3-deoxy-D-manno-octulosonate biosynthesis; CMP-3-deoxy-D-manno-octulosonate from 3-deoxy-D-manno-octulosonate and CTP: step 1/1. The protein operates within bacterial outer membrane biogenesis; lipopolysaccharide biosynthesis. Functionally, activates KDO (a required 8-carbon sugar) for incorporation into bacterial lipopolysaccharide in Gram-negative bacteria. The protein is 3-deoxy-manno-octulosonate cytidylyltransferase of Anaeromyxobacter sp. (strain K).